The following is a 308-amino-acid chain: Probable manganese-dependent inorganic pyrophosphatase (308 aa).

Positions 9, 13, 15, 75, 97, and 149 each coordinate Mn(2+).

Belongs to the PPase class C family. Mn(2+) is required as a cofactor.

It localises to the cytoplasm. It carries out the reaction diphosphate + H2O = 2 phosphate + H(+). In Listeria monocytogenes serotype 4b (strain CLIP80459), this protein is Probable manganese-dependent inorganic pyrophosphatase.